The sequence spans 325 residues: 6-phosphogluconolactonase 3, chloroplastic (325 aa).

A chloroplast-targeting transit peptide spans 1–68 (MASSSCFLRS…KSSDTRRKVK (68 aa)). The disordered stretch occupies residues 51-73 (SIGTGSTKKSSDTRRKVKSMATT). Residues 323–325 (SKL) carry the Microbody targeting signal motif.

This sequence belongs to the glucosamine/galactosamine-6-phosphate isomerase family. 6-phosphogluconolactonase subfamily. As to quaternary structure, interacts with TRXM2. Expressed in roots, leaves and shoots.

The protein resides in the plastid. The protein localises to the chloroplast. Its subcellular location is the peroxisome. It carries out the reaction 6-phospho-D-glucono-1,5-lactone + H2O = 6-phospho-D-gluconate + H(+). It functions in the pathway carbohydrate degradation; pentose phosphate pathway; D-ribulose 5-phosphate from D-glucose 6-phosphate (oxidative stage): step 2/3. Catalyzes the hydrolysis of 6-phosphogluconolactone to 6-phosphogluconate. Involved in the regulation of cellular redox state; enzymatic activity is required for this function. Required for sugar-dependent expression of nitrate assimilation genes in the nucleus of root cells. This is 6-phosphogluconolactonase 3, chloroplastic from Arabidopsis thaliana (Mouse-ear cress).